The following is a 649-amino-acid chain: Threonine--tRNA ligase (649 aa).

Positions 1 to 61 (MIKITFPDGA…TQDGSIEIVT (61 aa)) constitute a TGS domain. The segment at 242-540 (DHRKLGKELD…LIETYKGAFP (299 aa)) is catalytic. The Zn(2+) site is built by C336, H387, and H517.

It belongs to the class-II aminoacyl-tRNA synthetase family. In terms of assembly, homodimer. It depends on Zn(2+) as a cofactor.

It localises to the cytoplasm. The catalysed reaction is tRNA(Thr) + L-threonine + ATP = L-threonyl-tRNA(Thr) + AMP + diphosphate + H(+). Functionally, catalyzes the attachment of threonine to tRNA(Thr) in a two-step reaction: L-threonine is first activated by ATP to form Thr-AMP and then transferred to the acceptor end of tRNA(Thr). Also edits incorrectly charged L-seryl-tRNA(Thr). The protein is Threonine--tRNA ligase of Streptococcus mutans serotype c (strain ATCC 700610 / UA159).